Here is a 245-residue protein sequence, read N- to C-terminus: Probable 2-phosphosulfolactate phosphatase (245 aa).

It belongs to the ComB family. The cofactor is Mg(2+).

The enzyme catalyses (2R)-O-phospho-3-sulfolactate + H2O = (2R)-3-sulfolactate + phosphate. The chain is Probable 2-phosphosulfolactate phosphatase from Synechococcus sp. (strain RCC307).